Consider the following 6793-residue polypeptide: Replicase polyprotein 1ab (6793 aa).

Residues 2 to 109 (ASNHISLAFA…ELDLVFGRCG (108 aa)) enclose the CoV Nsp1 globular domain. A CoV Nsp2 N-terminal domain is found at 112 to 368 (TIPVDQFMCG…TKFKFQLLAN (257 aa)). The CoV Nsp2 middle domain maps to 396 to 785 (ILGLPWFVKK…LDTVTSFIKV (390 aa)). Residues 776 to 897 (LDTVTSFIKV…VASCFKKKGG (122 aa)) form the CoV Nsp2 C-terminal domain. Residues 898 to 993 (GVVTISDEVQ…IMVSQWPLSS (96 aa)) form the Ubiquitin-like 1 domain. Residues 1069 to 1302 (AFIEDKPVVV…SCDVKPFLTY (234 aa)) form the Peptidase C16 1 domain. Cysteine 1103 functions as the For PL1-PRO activity in the catalytic mechanism. The C4-type 1; degenerate zinc-finger motif lies at 1174-1205 (CGCGPGVRVYENAIFRFTPLKTAFPMGRCLIC). Catalysis depends on for PL1-PRO activity residues histidine 1252 and aspartate 1265. Positions 1303–1467 (KNIEFYQGEL…FQTEQPVEPL (165 aa)) constitute a Macro domain. Residues 1638 to 1693 (AKPVQVVVTQDQRSFHTVELSTSQTYGQQLGDCVVEDKKVTNLKPVSKDKVVSVVP) enclose the Ubiquitin-like 2 domain. In terms of domain architecture, Peptidase C16 2 spans 1699-1965 (KHYGFVDAGI…FLDTMNVASE (267 aa)). The active-site For PL2-PRO activity is the cysteine 1737. Residues 1816 to 1849 (TTCDGTCSTKRVVSTPVVNASVLKVGLDDGNCVH) form a C4-type 2; degenerate zinc finger. Active-site for PL2-PRO activity residues include histidine 1902 and aspartate 1915. 2 helical membrane-spanning segments follow: residues 1973-1993 (FVSRNIIVLIVYLFSLLAICF) and 2036-2056 (YIKVFLKFSLVLYTLYALMFM). Residues 1973 to 2184 (FVSRNIIVLI…MGNIIVVAFI (212 aa)) form an HD1 region. In terms of domain architecture, 3Ecto spans 2052–2116 (ALMFMFIRFT…TRVIWQHLKD (65 aa)). Intrachain disulfides connect cysteine 2068–cysteine 2094 and cysteine 2086–cysteine 2091. 3 helical membrane passes run 2119-2139 (IGNILPLFYLVFLIIFGGFFV), 2141-2161 (IGITYFIMQYINAAGVALGYQ), and 2164-2184 (VWLLHLLPFNSMGNIIVVAFI). The Y1 stretch occupies residues 2190-2280 (LFLKHVLFGC…VTKLNVIPTG (91 aa)). Residues 2190-2530 (LFLKHVLFGC…PTISVANKKG (341 aa)) enclose the CoV Nsp3 Y domain. Zn(2+)-binding residues include histidine 2194, cysteine 2199, cysteine 2204, cysteine 2207, cysteine 2240, histidine 2243, cysteine 2247, and cysteine 2250. Positions 2194 to 2207 (HVLFGCDKPSCIAC) are ZF1. The interval 2240–2250 (CKKHNFFCVDC) is ZF2. Residues 2281-2370 (PATIIIDKVE…LVDSALLASL (90 aa)) form a Y2 region. A coV-Y region spans residues 2281-2530 (PATIIIDKVE…PTISVANKKG (250 aa)). A Y3 region spans residues 2371 to 2428 (NVDFSANLHKAFVEVLSNSFGKDLSNCSNMNECRESLGLSDVPEEEFSAAVSEAHRYD). The interval 2429 to 2530 (VLISDVSFNN…PTISVANKKG (102 aa)) is Y4. A run of 7 helical transmembrane segments spans residues 2543 to 2563 (FFWHLCVLIVVLFVATSLLDF), 2634 to 2654 (VPAGVFLYGKSLIFAMSTIFG), 2669 to 2689 (DSCIFNSACTTLSGIGGRNVY), 2769 to 2789 (GSDYVCGTGFFSLLFNVIGMF), 2802 to 2822 (ILLNCVVAFTAVMACFAFTKF), 2829 to 2849 (MSFGVLSVGLCTVVNNLSYVV), and 2878 to 2898 (VGFAISYCFLAPWWVVLAYLI). The segment at 2543–2898 (FFWHLCVLIV…PWWVVLAYLI (356 aa)) is HD2. A Nsp4C domain is found at 2917–3012 (LFEGDKFVGS…PTVSYNSTLQ (96 aa)). Residues 3013 to 3314 (AGLRKMAQPS…VKQMYGVTLQ (302 aa)) enclose the Peptidase C30 domain. Active-site for 3CL-PRO activity residues include histidine 3053 and cysteine 3156. Transmembrane regions (helical) follow at residues 3351-3371 (GYITPVFLAIIVASSALMLLV), 3376-3396 (LFLQLYLLPSLCIVSGYNIFK), 3414-3434 (FGGFNVTGVLNISLCCFVMGL), 3443-3463 (PNKIFSYVVAVLTVLYTYYYS), 3466-3486 (VLGLILTSMSGFTNYWFIGTA), 3488-3507 (YKLATYVLPHTSLLDSFDAI), and 3511-3531 (VFLYLLLGYCNCVYYGSLYWI). The segment at 3351–3531 (GYITPVFLAI…CVYYGSLYWI (181 aa)) is HD3. The RdRp Nsp7 cofactor domain occupies 3591–3673 (SKLTDLKCTN…SYFNDSSVLQ (83 aa)). The 195-residue stretch at 3674–3868 (SVAATYVNLP…LNCERIIKLQ (195 aa)) folds into the RdRp Nsp8 cofactor domain. A Nsp9 ssRNA-binding domain is found at 3869-3976 (NNEIIPSKIK…GFIGATVRLQ (108 aa)). The 139-residue stretch at 3977-4115 (AGKQTEQATN…DRAVIQSVDS (139 aa)) folds into the ExoN/MTase coactivator domain. Residues cysteine 4050, cysteine 4053, histidine 4059, cysteine 4066, cysteine 4092, cysteine 4095, cysteine 4103, and cysteine 4105 each contribute to the Zn(2+) site. 2 zinc fingers span residues 4050-4066 (CLYCRAHVEHPDMDGFC) and 4092-4105 (CKVCGCWQANGCTC). One can recognise a NiRAN domain in the interval 4117–4366 (YLNRVRGSSA…ASECFIKSDI (250 aa)). The Nsp12 Interface domain maps to 4372-4470 (RTFDLLAYDF…WNKDLNLHSS (99 aa)). Zn(2+) contacts are provided by histidine 4401, cysteine 4407, cysteine 4412, cysteine 4416, and cysteine 4593. The region spanning 4471-5038 (RLTINELLQF…SMYEQSSVLQ (568 aa)) is the Nsp12 RNA-dependent RNA polymerase domain. Residues 4473 to 4687 (TINELLQFCA…HQKHLKSIVN (215 aa)) form a rdRp Fingers N-ter region. The rdRp Palm N-ter stretch occupies residues 4688–4726 (TRGASVVIGTTKFYGGWDNMLKTLIKDVENPHLMGWDYP). Residues 4718–4880 (PHLMGWDYPK…CYNSEYAALG (163 aa)) form the RdRp catalytic domain. The interval 4727–4785 (KCDRALPNMIRMISAMILGSKHVNCCSSSDRYYRLCNELAQVLTEMVYSNGGFYVKPGG) is rdRp Fingers C-ter. Histidine 4748, cysteine 4751, and cysteine 4752 together coordinate Zn(2+). Residues 4786–4921 (TTSGDATTAY…NKGPHEFCSQ (136 aa)) form a rdRp Palm C-ter region. Active-site residues include serine 4865, aspartate 4866, and aspartate 4867. The interval 4922 to 5038 (HTMQIVDKDG…SMYEQSSVLQ (117 aa)) is rdRp Thumb. Positions 5039–5151 (SAGLCVVCSS…DDFNTLATSD (113 aa)) constitute a CV ZBD domain. Cysteine 5043, cysteine 5046, cysteine 5054, cysteine 5057, cysteine 5064, cysteine 5067, histidine 5071, histidine 5077, cysteine 5088, cysteine 5093, cysteine 5110, and histidine 5113 together coordinate Zn(2+). The region spanning 5296 to 5477 (NIHEDYSNLI…MCVLKPDIFL (182 aa)) is the (+)RNA virus helicase ATP-binding domain. Residue 5321 to 5328 (GPPGSGKS) coordinates ATP. In terms of domain architecture, (+)RNA virus helicase C-terminal spans 5478 to 5647 (HKCYRCPAEI…DGCGLFKDCY (170 aa)). The 215-residue stretch at 5707 to 5921 (LFCTRDFAMR…RCLAIHDCFV (215 aa)) folds into the ExoN domain. Catalysis depends on residues aspartate 5725, glutamate 5727, and glutamate 5826. Residues cysteine 5842, cysteine 5844, cysteine 5860, histidine 5863, histidine 5891, cysteine 5895, and histidine 5898 each coordinate Zn(2+). Active-site residues include histidine 5902 and aspartate 5907. Zn(2+) is bound at residue cysteine 5913. One can recognise an N7-MTase domain in the interval 5930–6151 (YPFIANEQAI…NLWQTFKNSN (222 aa)). Position 5965 to 5971 (5965 to 5971 (DVGNPKG)) interacts with S-adenosyl-L-methionine. The gpppA-binding stretch occupies residues 6042–6056 (CNGGSLYVNNHAFHT). Cysteine 6080, cysteine 6097, cysteine 6108, and histidine 6111 together coordinate Zn(2+). One can recognise a Nsp15 N-terminal oligomerization domain in the interval 6154 to 6214 (GLENIAYNVV…NVAFELYAKR (61 aa)). The AV-Nsp11N/CoV-Nsp15M domain occupies 6215–6332 (KVGLTPPLTI…IYTRKDGAFV (118 aa)). The region spanning 6349-6489 (QPRSNMEEDF…KDHKVQTFYP (141 aa)) is the NendoU domain. Catalysis depends on residues histidine 6379, histidine 6394, lysine 6435, lysine 6537, aspartate 6621, lysine 6661, and glutamate 6694. The Nidovirus-type SAM-dependent 2'-O-MTase domain maps to 6493 to 6789 (SAEWKCGYSM…VVCGFSNHLV (297 aa)).

This sequence belongs to the coronaviruses polyprotein 1ab family. In terms of assembly, 3CL-PRO exists as monomer and homodimer. Eight copies of nsp7 and eight copies of nsp8 assemble to form a heterohexadecamer. Nsp9 is a dimer. Nsp10 forms a dodecamer. Mn(2+) is required as a cofactor. In terms of processing, specific enzymatic cleavages in vivo by its own proteases yield mature proteins. 3CL-PRO and PL-PRO proteinases are autocatalytically processed.

It localises to the host membrane. It is found in the host cytoplasm. The protein localises to the host perinuclear region. Its subcellular location is the host endoplasmic reticulum-Golgi intermediate compartment. It carries out the reaction Thiol-dependent hydrolysis of ester, thioester, amide, peptide and isopeptide bonds formed by the C-terminal Gly of ubiquitin (a 76-residue protein attached to proteins as an intracellular targeting signal).. The enzyme catalyses RNA(n) + a ribonucleoside 5'-triphosphate = RNA(n+1) + diphosphate. It catalyses the reaction ATP + H2O = ADP + phosphate + H(+). The catalysed reaction is a 5'-end diphospho-ribonucleoside in mRNA + GTP + H(+) = a 5'-end (5'-triphosphoguanosine)-ribonucleoside in mRNA + diphosphate. It carries out the reaction a 5'-end (N(7)-methyl 5'-triphosphoguanosine)-ribonucleoside in mRNA + S-adenosyl-L-methionine = a 5'-end (N(7)-methyl 5'-triphosphoguanosine)-(2'-O-methyl-ribonucleoside) in mRNA + S-adenosyl-L-homocysteine + H(+). The enzyme catalyses uridylyl-uridylyl-ribonucleotide-RNA = a 3'-end uridylyl-2',3'-cyclophospho-uridine-RNA + a 5'-end dephospho-ribonucleoside-RNA. Functionally, the replicase polyprotein of coronaviruses is a multifunctional protein: it contains the activities necessary for the transcription of negative stranded RNA, leader RNA, subgenomic mRNAs and progeny virion RNA as well as proteinases responsible for the cleavage of the polyprotein into functional products. In terms of biological role, the papain-like proteinase 1 (PLP1) and papain-like proteinase 2 (PLP2) are responsible for the cleavages located at the N-terminus of the replicase polyprotein. In addition, PLP2 possesses a deubiquitinating/deISGylating activity and processes both 'Lys-48'- and 'Lys-63'-linked polyubiquitin chains from cellular substrates. PLP2 also antagonizes innate immune induction of type I interferon by blocking the nuclear translocation of host IRF-3. Responsible for the majority of cleavages as it cleaves the C-terminus of replicase polyprotein at 11 sites. Recognizes substrates containing the core sequence [ILMVF]-Q-|-[SGACN]. Inhibited by the substrate-analog Cbz-Val-Asn-Ser-Thr-Leu-Gln-CMK. Also contains an ADP-ribose-1''-phosphate (ADRP)-binding function. Its function is as follows. The helicase which contains a zinc finger structure displays RNA and DNA duplex-unwinding activities with 5' to 3' polarity. ATPase activity is strongly stimulated by poly(U), poly(dT), poly(C), poly(dA), but not by poly(G). Functionally, the exoribonuclease acts on both ssRNA and dsRNA in a 3' to 5' direction. In terms of biological role, nsp7-nsp8 hexadecamer may possibly confer processivity to the polymerase, maybe by binding to dsRNA or by producing primers utilized by the latter. Forms a primer, NSP9-pU, which is utilized by the polymerase for the initiation of RNA chains. Interacts with ribosome signal recognition particle RNA (SRP). Together with NSP8, suppress protein integration into the cell membrane, thereby disrupting host immune defenses. Its function is as follows. RNA-directed RNA polymerase that catalyzes the transcription of viral genomic and subgenomic RNAs. Acts in complex with nsp7 and nsp8 to transcribe both the minus and positive strands of genomic RNA. The kinase-like NiRAN domain of NSP12 attaches one or more nucleotides to the amino terminus of NSP9, forming a covalent RNA-protein intermediate that serves as transcription/replication primer. Subgenomic RNAs (sgRNAs) are formed by discontinuous transcription: The polymerase has the ability to pause at transcription-regulating sequences (TRS) and jump to the leader TRS, resulting in a major deletion. This creates a series of subgenomic RNAs that are replicated, transcribed and translated. In addition, Nsp12 is a subunit of the viral RNA capping enzyme that catalyzes the RNA guanylyltransferase reaction for genomic and sub-genomic RNAs. Subsequently, the NiRAN domain transfers RNA to GDP, and forms the core cap structure GpppA-RNA. Functionally, plays a role in viral transcription/replication and prevents the simultaneous activation of host cell dsRNA sensors, such as MDA5/IFIH1, OAS, and PKR. Acts by degrading the 5'-polyuridines generated during replication of the poly(A) region of viral genomic and subgenomic RNAs. Catalyzes a two-step reaction in which a 2'3'-cyclic phosphate (2'3'-cP) is first generated by 2'-O transesterification, which is then hydrolyzed to a 3'-phosphate (3'-P). If not degraded, poly(U) RNA would hybridize with poly(A) RNA tails and activate host dsRNA sensors. This Bat coronavirus 512/2005 (BtCoV) protein is Replicase polyprotein 1ab (rep).